We begin with the raw amino-acid sequence, 117 residues long: uncharacterized protein (117 aa).

Residues 96–117 are disordered; the sequence is RKGGASKHRTLSAETGIRGEGE.

This is an uncharacterized protein from Saccharomyces cerevisiae (strain ATCC 204508 / S288c) (Baker's yeast).